A 274-amino-acid chain; its full sequence is NADPH-dependent 7-cyano-7-deazaguanine reductase (274 aa).

Residue 80-82 (VES) coordinates substrate. 82 to 83 (SK) serves as a coordination point for NADPH. C181 serves as the catalytic Thioimide intermediate. D188 serves as the catalytic Proton donor. 220-221 (HE) lines the substrate pocket. 249-250 (RG) serves as a coordination point for NADPH.

It belongs to the GTP cyclohydrolase I family. QueF type 2 subfamily. Homodimer.

It is found in the cytoplasm. It carries out the reaction 7-aminomethyl-7-carbaguanine + 2 NADP(+) = 7-cyano-7-deazaguanine + 2 NADPH + 3 H(+). It participates in tRNA modification; tRNA-queuosine biosynthesis. Catalyzes the NADPH-dependent reduction of 7-cyano-7-deazaguanine (preQ0) to 7-aminomethyl-7-deazaguanine (preQ1). The chain is NADPH-dependent 7-cyano-7-deazaguanine reductase from Burkholderia multivorans (strain ATCC 17616 / 249).